The sequence spans 386 residues: LL-diaminopimelate aminotransferase (386 aa).

Tyr-13 and Gly-38 together coordinate substrate. Residues Tyr-67, 101–102, Tyr-126, Asn-176, Tyr-207, and 235–237 contribute to the pyridoxal 5'-phosphate site; these read SK and SLS. Substrate contacts are provided by Lys-102, Tyr-126, and Asn-176. N6-(pyridoxal phosphate)lysine is present on Lys-238. Arg-246 contacts pyridoxal 5'-phosphate. Arg-364 serves as a coordination point for substrate.

Belongs to the class-I pyridoxal-phosphate-dependent aminotransferase family. LL-diaminopimelate aminotransferase subfamily. In terms of assembly, homodimer. Pyridoxal 5'-phosphate is required as a cofactor.

It catalyses the reaction (2S,6S)-2,6-diaminopimelate + 2-oxoglutarate = (S)-2,3,4,5-tetrahydrodipicolinate + L-glutamate + H2O + H(+). It participates in amino-acid biosynthesis; L-lysine biosynthesis via DAP pathway; LL-2,6-diaminopimelate from (S)-tetrahydrodipicolinate (aminotransferase route): step 1/1. Its function is as follows. Involved in the synthesis of meso-diaminopimelate (m-DAP or DL-DAP), required for both lysine and peptidoglycan biosynthesis. Catalyzes the direct conversion of tetrahydrodipicolinate to LL-diaminopimelate. The sequence is that of LL-diaminopimelate aminotransferase from Natranaerobius thermophilus (strain ATCC BAA-1301 / DSM 18059 / JW/NM-WN-LF).